A 448-amino-acid polypeptide reads, in one-letter code: MSVHSEVLHALLKDPFIQKLIDAEPVFWANSGKKEGPLPRADEWATEIAEAEKRMQRFAPYIAEVFPETKGAKGIIESPLFEVQHMKGKLEAAYQQPFPGRWLLKCDHELPISGSIKARGGIYEVLKYAENLALQEGMLQETDDYRILQEERFTGFFSRYSIAVGSTGNLGLSIGIIGAALGFRVTVHMSADAKQWKKDLLRQKGVTVMEYETDYSEAVNEGRRQAEQDPFCYFIDDEHSRQLFLGYAVAASRLKTQLDCMNIKPSLETPLFVYLPCGVGGGPGGVAFGLKLLYGDDVHVFFAEPTHSPCMLLGLYSGLHEKISVQDIGLDNQTAADGLAVGRPSGFVGKLIEPLLSGCYTVEDNTLYTLLHMLAVSEDKYLEPSALAGMFGPVQLFSTEEGRRYAQKYKMEHAVHVVWGTGGSMVPKDEMAAYNRIGADLLKKRNEK.

An N6-(pyridoxal phosphate)lysine modification is found at Lys117.

This sequence belongs to the serine/threonine dehydratase family. DsdA subfamily. The cofactor is pyridoxal 5'-phosphate.

It carries out the reaction D-serine = pyruvate + NH4(+). The chain is Probable D-serine dehydratase (dsdA) from Bacillus subtilis (strain 168).